Consider the following 664-residue polypeptide: Threonine--tRNA ligase (664 aa).

The TGS domain maps to 1-64 (MSELLKITLP…TADAQLALVT (64 aa)). Residues 250–559 (DHRKLGNEMD…LIEHFAGRLP (310 aa)) are catalytic. Residues C355, H406, and H536 each coordinate Zn(2+).

This sequence belongs to the class-II aminoacyl-tRNA synthetase family. As to quaternary structure, homodimer. Zn(2+) is required as a cofactor.

Its subcellular location is the cytoplasm. The enzyme catalyses tRNA(Thr) + L-threonine + ATP = L-threonyl-tRNA(Thr) + AMP + diphosphate + H(+). In terms of biological role, catalyzes the attachment of threonine to tRNA(Thr) in a two-step reaction: L-threonine is first activated by ATP to form Thr-AMP and then transferred to the acceptor end of tRNA(Thr). Also edits incorrectly charged L-seryl-tRNA(Thr). The protein is Threonine--tRNA ligase of Novosphingobium aromaticivorans (strain ATCC 700278 / DSM 12444 / CCUG 56034 / CIP 105152 / NBRC 16084 / F199).